The sequence spans 196 residues: MDKVILVLLMSLGASSQPLTDTPRLFSMAVSRVQHLHLLAQRLFADFESSLQTDEQRQLNKKFLPFCNSDSIISPNDKHETQRSSVLKLLSISYRLIESWDFPSLSLSGGLSPKLSDLKTGILLLIKASQDGADMFSESTTLQLGPYENYYQNLGGEEPLKRTYELLTCFKKDMHKVETYLTVAKCRLSPEANCTL.

A signal peptide spans 1 to 16 (MDKVILVLLMSLGASS). The residue at position 17 (Gln17) is a Pyrrolidone carboxylic acid. His35 is a Zn(2+) binding site. A disulfide bond links Cys67 and Cys169. Position 178 (Glu178) interacts with Zn(2+). A disulfide bridge links Cys186 with Cys194.

Belongs to the somatotropin/prolactin family.

The protein localises to the secreted. In terms of biological role, growth hormone plays an important role in growth control and is involved in the regulation of several anabolic processes. Implicated as an osmoregulatory substance important for seawater adaptation. The polypeptide is Somatotropin (gh) (Takifugu rubripes (Japanese pufferfish)).